Reading from the N-terminus, the 322-residue chain is Acetylglutamate kinase (322 aa).

Substrate-binding positions include 89–90, R111, and N217; that span reads GG.

This sequence belongs to the acetylglutamate kinase family. ArgB subfamily.

It localises to the cytoplasm. It catalyses the reaction N-acetyl-L-glutamate + ATP = N-acetyl-L-glutamyl 5-phosphate + ADP. It participates in amino-acid biosynthesis; L-arginine biosynthesis; N(2)-acetyl-L-ornithine from L-glutamate: step 2/4. Its function is as follows. Catalyzes the ATP-dependent phosphorylation of N-acetyl-L-glutamate. The chain is Acetylglutamate kinase from Ehrlichia ruminantium (strain Gardel).